The chain runs to 524 residues: Glucose-6-phosphate isomerase (524 aa).

Glu346 functions as the Proton donor in the catalytic mechanism. Active-site residues include His377 and Lys492.

It belongs to the GPI family.

The protein resides in the cytoplasm. It carries out the reaction alpha-D-glucose 6-phosphate = beta-D-fructose 6-phosphate. The protein operates within carbohydrate biosynthesis; gluconeogenesis. It functions in the pathway carbohydrate degradation; glycolysis; D-glyceraldehyde 3-phosphate and glycerone phosphate from D-glucose: step 2/4. Its function is as follows. Catalyzes the reversible isomerization of glucose-6-phosphate to fructose-6-phosphate. The polypeptide is Glucose-6-phosphate isomerase (Chlamydia trachomatis serovar A (strain ATCC VR-571B / DSM 19440 / HAR-13)).